The following is a 432-amino-acid chain: Glutamate-1-semialdehyde 2,1-aminomutase (432 aa).

Lysine 272 is subject to N6-(pyridoxal phosphate)lysine.

Belongs to the class-III pyridoxal-phosphate-dependent aminotransferase family. HemL subfamily. As to quaternary structure, homodimer. It depends on pyridoxal 5'-phosphate as a cofactor.

Its subcellular location is the cytoplasm. The catalysed reaction is (S)-4-amino-5-oxopentanoate = 5-aminolevulinate. The protein operates within porphyrin-containing compound metabolism; protoporphyrin-IX biosynthesis; 5-aminolevulinate from L-glutamyl-tRNA(Glu): step 2/2. Its pathway is porphyrin-containing compound metabolism; chlorophyll biosynthesis. The polypeptide is Glutamate-1-semialdehyde 2,1-aminomutase (Trichormus variabilis (strain ATCC 29413 / PCC 7937) (Anabaena variabilis)).